The sequence spans 440 residues: Golgi-associated RAB2 interactor protein 2 (440 aa).

This sequence belongs to the GARIN family. Interacts with CALM1. As to expression, expressed in testis (at protein level).

It localises to the cell projection. The protein localises to the cilium. It is found in the flagellum. Seems to play a role in sperm motility. The sequence is that of Golgi-associated RAB2 interactor protein 2 from Mus musculus (Mouse).